We begin with the raw amino-acid sequence, 431 residues long: uncharacterized protein (431 aa).

Disordered regions lie at residues 17 to 66 (VDPE…GQQA) and 81 to 415 (GSVT…ALPR). A compositionally biased stretch (basic and acidic residues) spans 91–106 (DKADREPAARPRDPRS). Basic residues predominate over residues 173–195 (TYRRRRPTAATPSRKKKARRGPK). Positions 235 to 244 (RTPGPVHSAA) are enriched in low complexity. Over residues 299-312 (RMGGSSGGRGGTPG) the composition is skewed to gly residues. Over residues 317-342 (RAAPGARPTAPDGAPGRWDGPADGPA) the composition is skewed to low complexity. Residues 343-360 (PGLGRGGWGVGREAGGSG) show a composition bias toward gly residues.

This is an uncharacterized protein from Homo sapiens (Human).